Reading from the N-terminus, the 310-residue chain is tRNA uridine(34) hydroxylase (310 aa).

Residues serine 124–serine 218 form the Rhodanese domain. Cysteine 178 acts as the Cysteine persulfide intermediate in catalysis.

Belongs to the TrhO family.

It catalyses the reaction uridine(34) in tRNA + AH2 + O2 = 5-hydroxyuridine(34) in tRNA + A + H2O. Functionally, catalyzes oxygen-dependent 5-hydroxyuridine (ho5U) modification at position 34 in tRNAs. This is tRNA uridine(34) hydroxylase from Pseudomonas putida (strain GB-1).